A 206-amino-acid chain; its full sequence is LexA repressor (206 aa).

The segment at residues 28–48 (VREIGEAVGLASSSTVHGHLA) is a DNA-binding region (H-T-H motif). Active-site for autocatalytic cleavage activity residues include Ser128 and Lys166.

The protein belongs to the peptidase S24 family. In terms of assembly, homodimer.

It catalyses the reaction Hydrolysis of Ala-|-Gly bond in repressor LexA.. Represses a number of genes involved in the response to DNA damage (SOS response), including recA and lexA. In the presence of single-stranded DNA, RecA interacts with LexA causing an autocatalytic cleavage which disrupts the DNA-binding part of LexA, leading to derepression of the SOS regulon and eventually DNA repair. This Bacillus pumilus (strain SAFR-032) protein is LexA repressor.